The chain runs to 247 residues: Geranylgeranylglyceryl phosphate synthase (247 aa).

Residues Asp-23 and Ser-52 each coordinate Mg(2+). Residues 171–177 (YLEAGSG), 203–204 (GG), and 225–226 (GT) contribute to the sn-glycerol 1-phosphate site.

The protein belongs to the GGGP/HepGP synthase family. Group II subfamily. It depends on Mg(2+) as a cofactor.

The protein resides in the cytoplasm. The enzyme catalyses sn-glycerol 1-phosphate + (2E,6E,10E)-geranylgeranyl diphosphate = sn-3-O-(geranylgeranyl)glycerol 1-phosphate + diphosphate. Its pathway is membrane lipid metabolism; glycerophospholipid metabolism. Functionally, prenyltransferase that catalyzes the transfer of the geranylgeranyl moiety of geranylgeranyl diphosphate (GGPP) to the C3 hydroxyl of sn-glycerol-1-phosphate (G1P). This reaction is the first ether-bond-formation step in the biosynthesis of archaeal membrane lipids. This Methanococcoides burtonii (strain DSM 6242 / NBRC 107633 / OCM 468 / ACE-M) protein is Geranylgeranylglyceryl phosphate synthase.